The sequence spans 874 residues: Valine--tRNA ligase (874 aa).

The 'HIGH' region signature appears at 46–56 (PNVTGHLHIGH). The 'KMSKS' region motif lies at 523–527 (KMSKS). Residue lysine 526 coordinates ATP. The stretch at 805 to 874 (DYVFQMKKAS…TLTDLKQKVK (70 aa)) forms a coiled coil.

The protein belongs to the class-I aminoacyl-tRNA synthetase family. ValS type 1 subfamily. As to quaternary structure, monomer.

The protein localises to the cytoplasm. It catalyses the reaction tRNA(Val) + L-valine + ATP = L-valyl-tRNA(Val) + AMP + diphosphate. Its function is as follows. Catalyzes the attachment of valine to tRNA(Val). As ValRS can inadvertently accommodate and process structurally similar amino acids such as threonine, to avoid such errors, it has a 'posttransfer' editing activity that hydrolyzes mischarged Thr-tRNA(Val) in a tRNA-dependent manner. This is Valine--tRNA ligase from Ureaplasma parvum serovar 3 (strain ATCC 700970).